A 61-amino-acid polypeptide reads, in one-letter code: Large ribosomal subunit protein uL30 (61 aa).

The protein belongs to the universal ribosomal protein uL30 family. Part of the 50S ribosomal subunit.

This is Large ribosomal subunit protein uL30 from Nitrosomonas europaea (strain ATCC 19718 / CIP 103999 / KCTC 2705 / NBRC 14298).